Reading from the N-terminus, the 555-residue chain is Hydrogenase-4 component G (555 aa).

This sequence belongs to the complex I 49 kDa subunit family. It depends on [4Fe-4S] cluster as a cofactor.

In terms of biological role, possible component of hydrogenase 4. In Escherichia coli (strain K12), this protein is Hydrogenase-4 component G.